The sequence spans 381 residues: UDP-4-amino-4-deoxy-L-arabinose--oxoglutarate aminotransferase (381 aa).

Residue K182 is modified to N6-(pyridoxal phosphate)lysine.

The protein belongs to the DegT/DnrJ/EryC1 family. ArnB subfamily. As to quaternary structure, homodimer. It depends on pyridoxal 5'-phosphate as a cofactor.

It catalyses the reaction UDP-4-amino-4-deoxy-beta-L-arabinose + 2-oxoglutarate = UDP-beta-L-threo-pentopyranos-4-ulose + L-glutamate. It functions in the pathway nucleotide-sugar biosynthesis; UDP-4-deoxy-4-formamido-beta-L-arabinose biosynthesis; UDP-4-deoxy-4-formamido-beta-L-arabinose from UDP-alpha-D-glucuronate: step 2/3. The protein operates within bacterial outer membrane biogenesis; lipopolysaccharide biosynthesis. In terms of biological role, catalyzes the conversion of UDP-4-keto-arabinose (UDP-Ara4O) to UDP-4-amino-4-deoxy-L-arabinose (UDP-L-Ara4N). The modified arabinose is attached to lipid A and is required for resistance to polymyxin and cationic antimicrobial peptides. This Photorhabdus laumondii subsp. laumondii (strain DSM 15139 / CIP 105565 / TT01) (Photorhabdus luminescens subsp. laumondii) protein is UDP-4-amino-4-deoxy-L-arabinose--oxoglutarate aminotransferase.